The primary structure comprises 895 residues: DNA mismatch repair protein MutS (895 aa).

Residue 632–639 (GPNMAGKS) participates in ATP binding. The interval 824–849 (VTQDKKQVKKQTKNNHSARSGSRQQQ) is disordered. A compositionally biased stretch (polar residues) spans 837–849 (NNHSARSGSRQQQ).

It belongs to the DNA mismatch repair MutS family.

This protein is involved in the repair of mismatches in DNA. It is possible that it carries out the mismatch recognition step. This protein has a weak ATPase activity. The polypeptide is DNA mismatch repair protein MutS (Desulforapulum autotrophicum (strain ATCC 43914 / DSM 3382 / VKM B-1955 / HRM2) (Desulfobacterium autotrophicum)).